We begin with the raw amino-acid sequence, 442 residues long: F-box protein KIB2 (442 aa).

The F-box domain occupies 62-109 (SKQPVLVLDLLRSILERLSFVDFHRGRCISLEWYSASESCLAVKNPTS). Residues 236–243 (HKKGDENY) carry the Nuclear localization signal motif.

In terms of assembly, interacts with ASK7/BIN2/SK21.

Its subcellular location is the cytoplasm. The protein localises to the nucleus. The protein resides in the nucleolus. In terms of biological role, component of SCF(ASK-cullin-F-box) E3 ubiquitin ligase complexes, which may mediate the ubiquitination and subsequent proteasomal degradation of target proteins. Required for brassinosteroid (BR) signal transduction. Mediates ASK7/BIN2/SK21 inactivation both by competing with substrate binding (e.g. BZR1) and by promoting its ubiquitination and subsequent proteasomal degradation. This Arabidopsis thaliana (Mouse-ear cress) protein is F-box protein KIB2.